We begin with the raw amino-acid sequence, 200 residues long: V-type proton ATPase subunit E (200 aa).

It belongs to the V-ATPase E subunit family.

Functionally, produces ATP from ADP in the presence of a proton gradient across the membrane. This is V-type proton ATPase subunit E from Thermoanaerobacter pseudethanolicus (strain ATCC 33223 / 39E) (Clostridium thermohydrosulfuricum).